The chain runs to 47 residues: Photosystem II reaction center protein K (47 aa).

The propeptide occupies 1–10 (MAVYTLDLLA). The helical transmembrane segment at 19–39 (FGPLIDILPIIPLFFLLLAFV) threads the bilayer.

It belongs to the PsbK family. In terms of assembly, PSII is composed of 1 copy each of membrane proteins PsbA, PsbB, PsbC, PsbD, PsbE, PsbF, PsbH, PsbI, PsbJ, PsbK, PsbL, PsbM, PsbT, PsbX, PsbY, PsbZ, Psb30/Ycf12, peripheral proteins PsbO, CyanoQ (PsbQ), PsbU, PsbV and a large number of cofactors. It forms dimeric complexes.

It is found in the cellular thylakoid membrane. Its function is as follows. One of the components of the core complex of photosystem II (PSII). PSII is a light-driven water:plastoquinone oxidoreductase that uses light energy to abstract electrons from H(2)O, generating O(2) and a proton gradient subsequently used for ATP formation. It consists of a core antenna complex that captures photons, and an electron transfer chain that converts photonic excitation into a charge separation. In Synechococcus sp. (strain CC9311), this protein is Photosystem II reaction center protein K.